The sequence spans 283 residues: Undecaprenyl-diphosphatase (283 aa).

The next 6 helical transmembrane spans lie at 47 to 67 (PGLS…IAYF), 94 to 114 (LGIA…CIKL), 127 to 147 (VPAI…AELL), 197 to 217 (AARF…LVEL), 227 to 247 (GGVL…WLAI), and 261 to 281 (IFVV…SGSA).

The protein belongs to the UppP family.

It is found in the cell inner membrane. The enzyme catalyses di-trans,octa-cis-undecaprenyl diphosphate + H2O = di-trans,octa-cis-undecaprenyl phosphate + phosphate + H(+). Its function is as follows. Catalyzes the dephosphorylation of undecaprenyl diphosphate (UPP). Confers resistance to bacitracin. The protein is Undecaprenyl-diphosphatase of Synechococcus sp. (strain CC9311).